A 94-amino-acid polypeptide reads, in one-letter code: MLWTYDMMSFQKIYSPTQLANAMKLVRQQNGWTQSELAKKIGIKQATISNFENNPDNTSLTTFFKILQSLELSMTLCDAKNASPEAAEQQDLEW.

Residues 23-77 (MKLVRQQNGWTQSELAKKIGIKQATISNFENNPDNTSLTTFFKILQSLELSMTLC) form the HTH cro/C1-type domain. Residues 34–53 (QSELAKKIGIKQATISNFEN) constitute a DNA-binding region (H-T-H motif).

Homodimer. Forms a HipA(2)HipB(2) heterotetramer which can interact with DNA. This complex also blocks the toxic activity of HipA.

Antitoxin component of a type II type II toxin-antitoxin (TA) system. Neutralizes the toxic effect of cognate toxin HipA. Represses the hipBA operon promoter. The sequence is that of Antitoxin HipB (hipB) from Escherichia coli O6:H1 (strain CFT073 / ATCC 700928 / UPEC).